Reading from the N-terminus, the 240-residue chain is Manganese transport system ATP-binding protein MntB (240 aa).

Residues 1 to 233 (MEIQGLTIAY…KIQFAYGDAP (233 aa)) form the ABC transporter domain. Position 33-40 (33-40 (GPNGAGKS)) interacts with ATP.

The protein belongs to the ABC transporter superfamily.

Its subcellular location is the cell membrane. This protein is probably a component of a manganese permease, a binding protein-dependent, ATP-driven transport system. Probably responsible for energy coupling to the transport system. The protein is Manganese transport system ATP-binding protein MntB (mntB) of Listeria monocytogenes serovar 1/2a (strain ATCC BAA-679 / EGD-e).